A 384-amino-acid chain; its full sequence is Flap endonuclease 1 (384 aa).

The interval Met1–Arg105 is N-domain. Asp34 provides a ligand contact to Mg(2+). DNA is bound at residue Arg71. Positions 87, 159, 161, 180, and 182 each coordinate Mg(2+). Residues Glu123–Tyr254 are I-domain. Position 159 (Glu159) interacts with DNA. Residues Gly232 and Asp234 each coordinate DNA. Asp234 serves as a coordination point for Mg(2+). The interaction with PCNA stretch occupies residues Gly337–Phe345. The segment at Ser353–Phe384 is disordered. Residues Lys374 to Phe384 show a composition bias toward basic residues.

It belongs to the XPG/RAD2 endonuclease family. FEN1 subfamily. In terms of assembly, interacts with PCNA. Three molecules of FEN1 bind to one PCNA trimer with each molecule binding to one PCNA monomer. PCNA stimulates the nuclease activity without altering cleavage specificity. Mg(2+) serves as cofactor. In terms of processing, phosphorylated. Phosphorylation upon DNA damage induces relocalization to the nuclear plasma.

The protein localises to the nucleus. It localises to the nucleolus. The protein resides in the nucleoplasm. It is found in the mitochondrion. In terms of biological role, structure-specific nuclease with 5'-flap endonuclease and 5'-3' exonuclease activities involved in DNA replication and repair. During DNA replication, cleaves the 5'-overhanging flap structure that is generated by displacement synthesis when DNA polymerase encounters the 5'-end of a downstream Okazaki fragment. It enters the flap from the 5'-end and then tracks to cleave the flap base, leaving a nick for ligation. Also involved in the long patch base excision repair (LP-BER) pathway, by cleaving within the apurinic/apyrimidinic (AP) site-terminated flap. Acts as a genome stabilization factor that prevents flaps from equilibrating into structures that lead to duplications and deletions. Also possesses 5'-3' exonuclease activity on nicked or gapped double-stranded DNA, and exhibits RNase H activity. Also involved in replication and repair of rDNA and in repairing mitochondrial DNA. In Micromonas commoda (strain RCC299 / NOUM17 / CCMP2709) (Picoplanktonic green alga), this protein is Flap endonuclease 1.